Consider the following 79-residue polypeptide: Small ribosomal subunit protein bS18 (79 aa).

This sequence belongs to the bacterial ribosomal protein bS18 family. Part of the 30S ribosomal subunit. Forms a tight heterodimer with protein bS6.

Binds as a heterodimer with protein bS6 to the central domain of the 16S rRNA, where it helps stabilize the platform of the 30S subunit. The sequence is that of Small ribosomal subunit protein bS18 from Bacillus pumilus (strain SAFR-032).